We begin with the raw amino-acid sequence, 333 residues long: Tetraacyldisaccharide 4'-kinase (333 aa).

Residue 60 to 67 coordinates ATP; it reads TVGGTGKT.

This sequence belongs to the LpxK family.

The catalysed reaction is a lipid A disaccharide + ATP = a lipid IVA + ADP + H(+). It participates in glycolipid biosynthesis; lipid IV(A) biosynthesis; lipid IV(A) from (3R)-3-hydroxytetradecanoyl-[acyl-carrier-protein] and UDP-N-acetyl-alpha-D-glucosamine: step 6/6. Its function is as follows. Transfers the gamma-phosphate of ATP to the 4'-position of a tetraacyldisaccharide 1-phosphate intermediate (termed DS-1-P) to form tetraacyldisaccharide 1,4'-bis-phosphate (lipid IVA). This Azotobacter vinelandii (strain DJ / ATCC BAA-1303) protein is Tetraacyldisaccharide 4'-kinase.